Reading from the N-terminus, the 395-residue chain is Mannan polymerase complexes subunit MNN9 (395 aa).

The Cytoplasmic portion of the chain corresponds to 2-17 (SLSLVSYRLRKNPWVN). Residues 18–33 (IFLPVLAIFLIYIIFF) form a helical; Signal-anchor for type II membrane protein membrane-spanning segment. Over 34-395 (QRDQSLLGLN…LVYHIEEENH (362 aa)) the chain is Lumenal.

This sequence belongs to the ANP1/MMN9/VAN1 family. In terms of assembly, the M-Pol I complex contains MNN9 and VAN1. The M-Pol II complex is composed of ANP1, MNN9, MNN10, MNN11 and HOC1.

Its subcellular location is the endoplasmic reticulum membrane. It is found in the golgi apparatus membrane. It functions in the pathway protein modification; protein glycosylation. The M-Pol I and M-Pol II complexes possess alpha-1,6-mannosyltransferase activity and are probably involved in the elongation of the mannan backbone of N-linked glycans on cell wall and periplasmic proteins. May also provide alpha-1,2-mannosyltransferase activity to the M-Pol I complex. This is Mannan polymerase complexes subunit MNN9 (MNN9) from Saccharomyces cerevisiae (strain ATCC 204508 / S288c) (Baker's yeast).